Reading from the N-terminus, the 330-residue chain is Aspartate--ammonia ligase (330 aa).

The protein belongs to the class-II aminoacyl-tRNA synthetase family. AsnA subfamily.

Its subcellular location is the cytoplasm. The enzyme catalyses L-aspartate + NH4(+) + ATP = L-asparagine + AMP + diphosphate + H(+). It functions in the pathway amino-acid biosynthesis; L-asparagine biosynthesis; L-asparagine from L-aspartate (ammonia route): step 1/1. The sequence is that of Aspartate--ammonia ligase from Streptococcus pneumoniae serotype 19F (strain G54).